Reading from the N-terminus, the 398-residue chain is Probable aminomethyltransferase (398 aa).

The protein belongs to the GcvT family. In terms of assembly, the glycine cleavage system is composed of four proteins: P, T, L and H.

It carries out the reaction N(6)-[(R)-S(8)-aminomethyldihydrolipoyl]-L-lysyl-[protein] + (6S)-5,6,7,8-tetrahydrofolate = N(6)-[(R)-dihydrolipoyl]-L-lysyl-[protein] + (6R)-5,10-methylene-5,6,7,8-tetrahydrofolate + NH4(+). The glycine cleavage system catalyzes the degradation of glycine. This chain is Probable aminomethyltransferase, found in Thermococcus kodakarensis (strain ATCC BAA-918 / JCM 12380 / KOD1) (Pyrococcus kodakaraensis (strain KOD1)).